Reading from the N-terminus, the 152-residue chain is Transcriptional regulator MraZ (152 aa).

SpoVT-AbrB domains follow at residues A5 to E52 and A81 to T124.

The protein belongs to the MraZ family. In terms of assembly, forms oligomers.

The protein resides in the cytoplasm. The protein localises to the nucleoid. Functionally, negatively regulates its own expression and that of the subsequent genes in the proximal part of the division and cell wall (dcw) gene cluster. Acts by binding directly to DNA. May also regulate the expression of genes outside the dcw cluster. The chain is Transcriptional regulator MraZ from Yersinia pseudotuberculosis serotype O:1b (strain IP 31758).